Here is a 332-residue protein sequence, read N- to C-terminus: Glyceraldehyde-3-phosphate dehydrogenase (332 aa).

Residues 12-13 (RI), Asp34, Lys78, and Thr120 each bind NAD(+). D-glyceraldehyde 3-phosphate contacts are provided by residues 149–151 (SCT), Thr180, 209–210 (TG), and Arg232. Residue Cys150 is the Nucleophile of the active site. Asn314 lines the NAD(+) pocket.

Belongs to the glyceraldehyde-3-phosphate dehydrogenase family. As to quaternary structure, homotetramer.

It is found in the cytoplasm. It catalyses the reaction D-glyceraldehyde 3-phosphate + phosphate + NAD(+) = (2R)-3-phospho-glyceroyl phosphate + NADH + H(+). It functions in the pathway carbohydrate degradation; glycolysis; pyruvate from D-glyceraldehyde 3-phosphate: step 1/5. In terms of biological role, catalyzes the oxidative phosphorylation of glyceraldehyde 3-phosphate (G3P) to 1,3-bisphosphoglycerate (BPG) using the cofactor NAD. The first reaction step involves the formation of a hemiacetal intermediate between G3P and a cysteine residue, and this hemiacetal intermediate is then oxidized to a thioester, with concomitant reduction of NAD to NADH. The reduced NADH is then exchanged with the second NAD, and the thioester is attacked by a nucleophilic inorganic phosphate to produce BPG. This is Glyceraldehyde-3-phosphate dehydrogenase (gapA) from Buchnera aphidicola subsp. Schizaphis graminum (strain Sg).